A 68-amino-acid polypeptide reads, in one-letter code: Large ribosomal subunit protein bL35 (68 aa).

It belongs to the bacterial ribosomal protein bL35 family.

In Rickettsia conorii (strain ATCC VR-613 / Malish 7), this protein is Large ribosomal subunit protein bL35.